We begin with the raw amino-acid sequence, 227 residues long: Albumin-2 (227 aa).

4 Hemopexin repeats span residues 3 to 46 (PGYI…GPTP), 61 to 111 (SYGI…FPFF), 117 to 165 (ESGI…YPCF), and 171 to 221 (ESGA…WPSL). Positions 7 and 65 each coordinate Ca(2+). S118 lines the spermine pocket. Positions 121 and 175 each coordinate Ca(2+).

In terms of assembly, monomer and homodimer. Dimers are prevalent in solution.

The protein localises to the cytoplasm. It is found in the cytosol. Functionally, may play a role in response to oxidative stress and polyamine biosynthesis. The monomeric form binds one hemin per monomer. In the dimeric form, about half of the dimers bind one molecule of spermine each under physiological conditions. Ligand binding is mutually exclusive as binding of hemin leads to dissociation of the dimer. This Lathyrus sativus (White vetchling) protein is Albumin-2.